The sequence spans 156 residues: Small ribosomal subunit protein uS7 (156 aa).

It belongs to the universal ribosomal protein uS7 family. In terms of assembly, part of the 30S ribosomal subunit. Contacts proteins S9 and S11.

Functionally, one of the primary rRNA binding proteins, it binds directly to 16S rRNA where it nucleates assembly of the head domain of the 30S subunit. Is located at the subunit interface close to the decoding center, probably blocks exit of the E-site tRNA. This chain is Small ribosomal subunit protein uS7, found in Mycoplasmopsis synoviae (strain 53) (Mycoplasma synoviae).